The following is a 94-amino-acid chain: Co-chaperonin GroES (94 aa).

The protein belongs to the GroES chaperonin family. As to quaternary structure, heptamer of 7 subunits arranged in a ring. Interacts with the chaperonin GroEL.

Its subcellular location is the cytoplasm. Its function is as follows. Together with the chaperonin GroEL, plays an essential role in assisting protein folding. The GroEL-GroES system forms a nano-cage that allows encapsulation of the non-native substrate proteins and provides a physical environment optimized to promote and accelerate protein folding. GroES binds to the apical surface of the GroEL ring, thereby capping the opening of the GroEL channel. The chain is Co-chaperonin GroES from Bacillus licheniformis (strain ATCC 14580 / DSM 13 / JCM 2505 / CCUG 7422 / NBRC 12200 / NCIMB 9375 / NCTC 10341 / NRRL NRS-1264 / Gibson 46).